We begin with the raw amino-acid sequence, 230 residues long: Probable cytokinin riboside 5'-monophosphate phosphoribohydrolase LOG4 (230 aa).

Residues Glu-91, 109-110 (RK), and 126-132 (GYGTIEE) contribute to the substrate site.

It belongs to the LOG family.

The enzyme catalyses N(6)-(dimethylallyl)adenosine 5'-phosphate + H2O = N(6)-dimethylallyladenine + D-ribose 5-phosphate. It carries out the reaction 9-ribosyl-trans-zeatin 5'-phosphate + H2O = trans-zeatin + D-ribose 5-phosphate. Functionally, cytokinin-activating enzyme working in the direct activation pathway. Phosphoribohydrolase that converts inactive cytokinin nucleotides to the biologically active free-base forms. The protein is Probable cytokinin riboside 5'-monophosphate phosphoribohydrolase LOG4 (LOGL4) of Oryza sativa subsp. japonica (Rice).